The following is an 84-amino-acid chain: Large ribosomal subunit protein bL27 (84 aa).

A disordered region spans residues 1 to 22; it reads MAHKKAGGSTRNGRDSESKRLG.

The protein belongs to the bacterial ribosomal protein bL27 family.

This is Large ribosomal subunit protein bL27 from Shewanella loihica (strain ATCC BAA-1088 / PV-4).